The primary structure comprises 415 residues: Tyrosine-protein phosphatase non-receptor type 2 (415 aa).

Residues 5–275 (IEREFEELDT…RFSYMAIIEG (271 aa)) form the Tyrosine-protein phosphatase domain. Position 22 is a phosphotyrosine (tyrosine 22). Residue serine 52 is modified to Phosphoserine. At tyrosine 68 the chain carries Phosphotyrosine. Substrate contacts are provided by residues aspartate 182, 216 to 222 (CSAGIGR), and glutamine 260. The active-site Phosphocysteine intermediate is the cysteine 216. S-nitrosocysteine is present on cysteine 216. Phosphoserine is present on residues serine 293, serine 298, and serine 304. An endoplasmic reticulum location region spans residues 346–415 (ESALRKRIRE…WTLFFQQNAL (70 aa)). The interval 376 to 415 (ERKRKRWLYWQPILTKMGFMSVILVGAFVGWTLFFQQNAL) is mediates interaction with STX17.

The protein belongs to the protein-tyrosine phosphatase family. Non-receptor class 1 subfamily. As to quaternary structure, interacts with RMDN3. Isoform 1 interacts with TMED9. Isoform 1 interacts with STX17; dephosphorylates STX17. Interacts with ITGA1 (via cytoplasmic domain); activates the phosphatase activity towards EGFR. Interacts with TRAF2; probably involved in tumor necrosis factor-mediated signaling. Interacts with MET. Interacts with FAM220A and STAT3; interaction with FAM220A promotes interaction of PTPN2 with transcriptional activator STAT3, leading to dephosphorylation of STAT3 by PTPN2 and negative regulation of STAT3 transcriptional activator activity. Post-translationally, specifically phosphorylated in a cell cycle-dependent manner by cyclin-dependent kinases CDK1 and CDK2. Probably activated through phosphorylation by PKR. In terms of tissue distribution, ubiquitously expressed. Isoform 2 is probably the major isoform. Isoform 1 is expressed in T-cells and in placenta.

The protein localises to the endoplasmic reticulum. It localises to the endoplasmic reticulum-Golgi intermediate compartment. The protein resides in the nucleus. It is found in the cytoplasm. Its subcellular location is the cell membrane. The enzyme catalyses O-phospho-L-tyrosyl-[protein] + H2O = L-tyrosyl-[protein] + phosphate. Its function is as follows. Non-receptor type tyrosine-specific phosphatase that dephosphorylates receptor protein tyrosine kinases including INSR, EGFR, CSF1R, PDGFR. Also dephosphorylates non-receptor protein tyrosine kinases like JAK1, JAK2, JAK3, Src family kinases, STAT1, STAT3 and STAT6 either in the nucleus or the cytoplasm. Negatively regulates numerous signaling pathways and biological processes like hematopoiesis, inflammatory response, cell proliferation and differentiation, and glucose homeostasis. Plays a multifaceted and important role in the development of the immune system. Functions in T-cell receptor signaling through dephosphorylation of FYN and LCK to control T-cells differentiation and activation. Dephosphorylates CSF1R, negatively regulating its downstream signaling and macrophage differentiation. Negatively regulates cytokine (IL2/interleukin-2 and interferon)-mediated signaling through dephosphorylation of the cytoplasmic kinases JAK1, JAK3 and their substrate STAT1, that propagate signaling downstream of the cytokine receptors. Also regulates the IL6/interleukin-6 and IL4/interleukin-4 cytokine signaling through dephosphorylation of STAT3 and STAT6 respectively. In addition to the immune system, it is involved in anchorage-dependent, negative regulation of EGF-stimulated cell growth. Activated by the integrin ITGA1/ITGB1, it dephosphorylates EGFR and negatively regulates EGF signaling. Dephosphorylates PDGFRB and negatively regulates platelet-derived growth factor receptor-beta signaling pathway and therefore cell proliferation. Negatively regulates tumor necrosis factor-mediated signaling downstream via MAPK through SRC dephosphorylation. May also regulate the hepatocyte growth factor receptor signaling pathway through dephosphorylation of the hepatocyte growth factor receptor MET. Also plays an important role in glucose homeostasis. For instance, negatively regulates the insulin receptor signaling pathway through the dephosphorylation of INSR and control gluconeogenesis and liver glucose production through negative regulation of the IL6 signaling pathways. May also bind DNA. This chain is Tyrosine-protein phosphatase non-receptor type 2 (PTPN2), found in Homo sapiens (Human).